The following is a 732-amino-acid chain: MCWTAKSFVRWLSSSVKYYPKDNHLQALCLCTKTKLNKCHILDWSRSPCNSAVPPGRILSWRLFSCKEGTKDLCKREKIASVTASELLYKDLLKSEQENWNKISRSYKAMTKRIKEKIEELHNKYTLHLESPRMRFGGNVYFEENGYILCSKADDDKGNVHILFSTEDMGFSGAYIKRIRISPDERYLATSLQSENSEEATCVIMKLGDVPFVEEVIPNVFSFEWATNDVLYYTSQKNLKCQNVFMTTFTNEKYTKLVYTEQDARFFVDIYCTKDRRFLTINSNSKTTSEVWLIDCRHPFKLPVLVQARTKGVIYHVEHRNNELYILTSYGEPAEYKLMKASVASTGMENWQLVYALEEKTKLIDLEMFRDHCIMFLQKAGYLYLNVIAFVSHSVQSIQLPTWACAFELESHPEHASSTCYFQLTSPVHPPRRFAYSFKENNLIEQAAEEVPIIMNCHTTRLLAKSKDETLVPITVFHNVNSKELHRKPLLVHVYGAYGIDLNMSFKEEKLMLIEEGWILAYCHVRGGGELGLRWHKDGCQQNKLKGLHDLKACIMLLHELGFSQPKYTALTAVSAGGVLAGAICNSDPELIRAVVLQAPFVDVLNTMMKTHLPLSIEEQEEWGNPLADEKCMKYIKNYCPYHNIKPQCYPSVFITAYENDQRVPLTGILRYVQKLRKATLDHASRTRKKGNWIPNIILDIQASGSHCDSSWEDSLNEVARHLAFLKKELQV.

Active-site charge relay system residues include Ser575, Asp661, and His707.

This sequence belongs to the peptidase S9A family. As to quaternary structure, homodimer.

The protein resides in the cytoplasm. The protein localises to the cytosol. Serine peptidase whose precise substrate specificity remains unclear. Does not cleave peptides after a arginine or lysine residue. Regulates trans-Golgi network morphology and sorting by regulating the membrane binding of the AP-1 complex. May play a role in the regulation of synaptic vesicle exocytosis. This chain is Prolyl endopeptidase-like (PREPL), found in Gallus gallus (Chicken).